We begin with the raw amino-acid sequence, 131 residues long: Protein FAM107B (131 aa).

A2 carries the N-acetylalanine modification. Positions 39-79 are disordered; that stretch reads MNQKRGLAPQNKPELQKVMEKRRRDQVIKQKEEEAQKKKSD. Residue K50 is modified to N6-acetyllysine. The span at 52 to 79 shows a compositional bias: basic and acidic residues; it reads ELQKVMEKRRRDQVIKQKEEEAQKKKSD. A coiled-coil region spans residues 61 to 112; the sequence is RRDQVIKQKEEEAQKKKSDLEIELLKRQQKLEQLELEKQKLQEEQENAPEFV.

Belongs to the FAM107 family. Expressed in the hippocampus and hypothalamus. Expressed in the pontine nuclei and reticulotegmental nucleus. Expressed in Purkinje cell and nuclear layers of the cerebelum. Expressed in the choroid plexus. Expressed in hippocampal granule neurons of the dente gyrus.

This Mus musculus (Mouse) protein is Protein FAM107B.